The primary structure comprises 660 residues: Glycogen debranching enzyme (660 aa).

Asp-338 functions as the Nucleophile in the catalytic mechanism. Glu-373 functions as the Proton donor in the catalytic mechanism. Residues 460-472 (NEANGEDNRDGAW) show a composition bias toward basic and acidic residues. Residues 460-482 (NEANGEDNRDGAWENHSNNHGYE) form a disordered region.

The protein belongs to the glycosyl hydrolase 13 family.

It carries out the reaction Hydrolysis of (1-&gt;6)-alpha-D-glucosidic linkages to branches with degrees of polymerization of three or four glucose residues in limit dextrin.. It functions in the pathway glycan degradation; glycogen degradation. Removes maltotriose and maltotetraose chains that are attached by 1,6-alpha-linkage to the limit dextrin main chain, generating a debranched limit dextrin. This chain is Glycogen debranching enzyme, found in Cronobacter sakazakii (strain ATCC BAA-894) (Enterobacter sakazakii).